The sequence spans 88 residues: Small ribosomal subunit protein bS16c (88 aa).

The protein belongs to the bacterial ribosomal protein bS16 family.

The protein localises to the plastid. It is found in the chloroplast. The polypeptide is Small ribosomal subunit protein bS16c (Solanum bulbocastanum (Wild potato)).